The following is a 242-amino-acid chain: Ubiquinone biosynthesis O-methyltransferase (242 aa).

4 residues coordinate S-adenosyl-L-methionine: R44, G64, D85, and M129.

Belongs to the methyltransferase superfamily. UbiG/COQ3 family.

It carries out the reaction a 3-demethylubiquinol + S-adenosyl-L-methionine = a ubiquinol + S-adenosyl-L-homocysteine + H(+). It catalyses the reaction a 3-(all-trans-polyprenyl)benzene-1,2-diol + S-adenosyl-L-methionine = a 2-methoxy-6-(all-trans-polyprenyl)phenol + S-adenosyl-L-homocysteine + H(+). Its pathway is cofactor biosynthesis; ubiquinone biosynthesis. Functionally, O-methyltransferase that catalyzes the 2 O-methylation steps in the ubiquinone biosynthetic pathway. This is Ubiquinone biosynthesis O-methyltransferase from Salmonella paratyphi A (strain ATCC 9150 / SARB42).